The following is a 72-amino-acid chain: Translation initiation factor IF-1 (72 aa).

The 72-residue stretch at Met1–Lys72 folds into the S1-like domain.

Belongs to the IF-1 family. As to quaternary structure, component of the 30S ribosomal translation pre-initiation complex which assembles on the 30S ribosome in the order IF-2 and IF-3, IF-1 and N-formylmethionyl-tRNA(fMet); mRNA recruitment can occur at any time during PIC assembly.

Its subcellular location is the cytoplasm. Functionally, one of the essential components for the initiation of protein synthesis. Stabilizes the binding of IF-2 and IF-3 on the 30S subunit to which N-formylmethionyl-tRNA(fMet) subsequently binds. Helps modulate mRNA selection, yielding the 30S pre-initiation complex (PIC). Upon addition of the 50S ribosomal subunit IF-1, IF-2 and IF-3 are released leaving the mature 70S translation initiation complex. In Streptococcus mutans serotype c (strain ATCC 700610 / UA159), this protein is Translation initiation factor IF-1.